Consider the following 260-residue polypeptide: Indole-3-glycerol phosphate synthase (260 aa).

Belongs to the TrpC family.

It carries out the reaction 1-(2-carboxyphenylamino)-1-deoxy-D-ribulose 5-phosphate + H(+) = (1S,2R)-1-C-(indol-3-yl)glycerol 3-phosphate + CO2 + H2O. The protein operates within amino-acid biosynthesis; L-tryptophan biosynthesis; L-tryptophan from chorismate: step 4/5. The sequence is that of Indole-3-glycerol phosphate synthase from Ruminiclostridium cellulolyticum (strain ATCC 35319 / DSM 5812 / JCM 6584 / H10) (Clostridium cellulolyticum).